The primary structure comprises 770 residues: MAKKNRLNTTQRKTLRQKEDEYIENLKTKIDEYDPKITKAKFFKDLPISDPTLKGLRESSFIKLTEIQADSIPVSLQGHDVLAAAKTGSGKTLAFLVPVIEKLYREKWTEFDGLGALIISPTRELAMQIYEVLTKIGSHTSFSAGLVIGGKDVKFELERISRINILIGTPGRILQHLDQAVGLNTSNLQMLVLDEADRCLDMGFKKTLDAIVSTLSPSRQTLLFSATQSQSVADLARLSLTDYKTVGTHDVMDGSVNKEASTPETLQQFYIEVPLADKLDILFSFIKSHLKCKMIVFLSSSKQVHFVYETFRKMQPGISLMHLHGRQKQRARTETLDKFNRAQQVCLFATDVVARGIDFPAVDWVVQVDCPEDVDTYIHRVGRCARYGKKGKSLIMLTPQEQEAFLKRLNARKIEPGKLNIKQSKKKSIKPQLQSLLFKDPELKYLGQKAFISYVRSIYVQKDKQVFKFDELPTEEFAYSLGLPGAPKIKMKGMKTIEQAKERKNAPRQLAFLSKANEDGEVIEDKSKQPRTKYDKMFERKNQTILSEHYLNITKAQAQEDEDDDFISVKRKDHEINEAELPALTLPTSRRAQKKALSKKASLASKGNASKLIFDDEGEAHPVYELEDEEEFHKRGDAEVQKTEFLTKESAVMADIDNIDKQVAKEKKQEKKRKRLEAMRREMEAAMEEEISGDEEEGKTVAYLGTGNLSDDMSDGDMPDSEGHLKKKARTVDYSHGHNPSNSVDDDIIEVEEPQTLEDLESLTAKLIQG.

The Q motif signature appears at 41–69; the sequence is KFFKDLPISDPTLKGLRESSFIKLTEIQA. One can recognise a Helicase ATP-binding domain in the interval 72–246; the sequence is IPVSLQGHDV…RLSLTDYKTV (175 aa). Residue 85 to 92 participates in ATP binding; sequence AKTGSGKT. The short motif at 194-197 is the DEAD box element; that stretch reads DEAD. The Helicase C-terminal domain occupies 278–437; the sequence is KLDILFSFIK…SIKPQLQSLL (160 aa). Phosphoserine occurs at positions 692, 710, 714, and 743. The segment at 705–724 is disordered; that stretch reads GTGNLSDDMSDGDMPDSEGH.

This sequence belongs to the DEAD box helicase family. DDX10/DBP4 subfamily. Interacts with the U3 and U14 snoRNAs. Associates with pre-ribosomal complexes.

It localises to the nucleus. It is found in the nucleolus. The catalysed reaction is ATP + H2O = ADP + phosphate + H(+). In terms of biological role, ATP-dependent RNA helicase required for ribosome biogenesis. Involved in the release of U14 snoRNA in pre-ribosomal complexes. Required for pre-rRNA cleavage at site A2. This is ATP-dependent RNA helicase HCA4 (HCA4) from Saccharomyces cerevisiae (strain ATCC 204508 / S288c) (Baker's yeast).